The primary structure comprises 205 residues: Bacterial microcompartment protein trimer-1 (205 aa).

Residues 1–20 (MDHAPERFDATPPAGEPDRP) form a disordered region. 2 BMC domains span residues 21–106 (ALGV…RFLD) and 120–204 (SVII…GRLF).

Belongs to the bacterial microcompartments protein family. Homotrimerizes to form a pseudohexamer. Unlike its paralogs BMC-T2 and BMC-T3, the pseudohexamers do not stack. The concave side faces outward, with the N- and C-terminii exposed to the cytoplasm.

The protein localises to the bacterial microcompartment. Its function is as follows. A minor component of the bacterial microcompartment (BMC) shell. Expression of 5 proteins in E.coli (BMC-H (Hoch_5815), BMC-P (Hoch_5814), and 3 BMC-T (Hoch_5812, Hoch_5816, Hoch_3341)) forms 40 nm artificial BMCs with a molecular mass of 6.5 MDa. This protein does not form stacked pseudohexamers in the BMC. There are 20 BMC-T pseudohexamers per BMC, composed of mixed BMC-T1, BMC-T2 and BMC-T3. The shell facets are 20-30 Angstroms thick, with 1 of BMC-T trimers protruding to the exterior. This is Bacterial microcompartment protein trimer-1 from Haliangium ochraceum (strain DSM 14365 / JCM 11303 / SMP-2).